We begin with the raw amino-acid sequence, 732 residues long: DNA ligase (732 aa).

Residues 47–51 (DAEYD), 96–97 (SI), and E133 each bind NAD(+). K135 serves as the catalytic N6-AMP-lysine intermediate. NAD(+) is bound by residues R156, E196, K317, and K341. Zn(2+)-binding residues include C470, C473, C488, and C494. Residues 653–732 (RATLPLAGKT…AGMLALLQGR (80 aa)) enclose the BRCT domain.

Belongs to the NAD-dependent DNA ligase family. LigA subfamily. It depends on Mg(2+) as a cofactor. Mn(2+) is required as a cofactor.

It catalyses the reaction NAD(+) + (deoxyribonucleotide)n-3'-hydroxyl + 5'-phospho-(deoxyribonucleotide)m = (deoxyribonucleotide)n+m + AMP + beta-nicotinamide D-nucleotide.. Its function is as follows. DNA ligase that catalyzes the formation of phosphodiester linkages between 5'-phosphoryl and 3'-hydroxyl groups in double-stranded DNA using NAD as a coenzyme and as the energy source for the reaction. It is essential for DNA replication and repair of damaged DNA. The polypeptide is DNA ligase (Paracidovorax citrulli (strain AAC00-1) (Acidovorax citrulli)).